The chain runs to 524 residues: Cytosolic Fe-S cluster assembly factor NAR1 (524 aa).

Residues Cys20, Cys52, Cys55, Cys58, Cys158, and Cys206 each contribute to the [4Fe-4S] cluster site. A disordered region spans residues 362-388; that stretch reads IRKRPTANGNDNSISLSSSINNQDNNN. A compositionally biased stretch (low complexity) spans 369-388; sequence NGNDNSISLSSSINNQDNNN. Residues Cys408 and Cys412 each contribute to the [4Fe-4S] cluster site. The interval 501–524 is disordered; sequence SSISETHNGDSKNTIEQPVQFTTW.

This sequence belongs to the NARF family.

Component of the cytosolic Fe/S protein assembly machinery. Required for maturation of extramitochondrial Fe/S proteins. May play a role in the transfer of pre-assembled Fe/S clusters to target apoproteins. This is Cytosolic Fe-S cluster assembly factor NAR1 (NAR1) from Vanderwaltozyma polyspora (strain ATCC 22028 / DSM 70294 / BCRC 21397 / CBS 2163 / NBRC 10782 / NRRL Y-8283 / UCD 57-17) (Kluyveromyces polysporus).